The primary structure comprises 156 residues: 6,7-dimethyl-8-ribityllumazine synthase (156 aa).

5-amino-6-(D-ribitylamino)uracil contacts are provided by residues Phe22, 57 to 59 (AYE), and 81 to 83 (TVI). (2S)-2-hydroxy-3-oxobutyl phosphate is bound at residue 86–87 (GT). His89 functions as the Proton donor in the catalytic mechanism. Phe114 lines the 5-amino-6-(D-ribitylamino)uracil pocket. Arg128 contributes to the (2S)-2-hydroxy-3-oxobutyl phosphate binding site.

Belongs to the DMRL synthase family. As to quaternary structure, forms an icosahedral capsid composed of 60 subunits, arranged as a dodecamer of pentamers.

It carries out the reaction (2S)-2-hydroxy-3-oxobutyl phosphate + 5-amino-6-(D-ribitylamino)uracil = 6,7-dimethyl-8-(1-D-ribityl)lumazine + phosphate + 2 H2O + H(+). Its pathway is cofactor biosynthesis; riboflavin biosynthesis; riboflavin from 2-hydroxy-3-oxobutyl phosphate and 5-amino-6-(D-ribitylamino)uracil: step 1/2. In terms of biological role, catalyzes the formation of 6,7-dimethyl-8-ribityllumazine by condensation of 5-amino-6-(D-ribitylamino)uracil with 3,4-dihydroxy-2-butanone 4-phosphate. This is the penultimate step in the biosynthesis of riboflavin. This is 6,7-dimethyl-8-ribityllumazine synthase from Edwardsiella ictaluri (strain 93-146).